Reading from the N-terminus, the 550-residue chain is Natural resistance-associated macrophage protein 1 (550 aa).

The interval 1-45 is disordered; it reads MTGDKGPQRLSGSSYGSISSPTSPTSPGPQQAPPRETYLSEKIPI. Residues 1 to 58 are Cytoplasmic-facing; that stretch reads MTGDKGPQRLSGSSYGSISSPTSPTSPGPQQAPPRETYLSEKIPIPDTKPGTFSLRKL. Residues 11–23 are compositionally biased toward low complexity; sequence SGSSYGSISSPTS. The helical transmembrane segment at 59–76 threads the bilayer; the sequence is WAFTGPGFLMSIAFLDPG. Topologically, residues 77-85 are extracellular; sequence NIESDLQAG. A helical transmembrane segment spans residues 86-105; it reads AVAGFKLLWVLLWATVLGLL. The Cytoplasmic segment spans residues 106 to 142; it reads CQRLAARLGVVTGKDLGEVCHLYYPKVPRTVLWLTIE. Residues 143–163 form a helical membrane-spanning segment; sequence LAIVGSDMQEVIGTAIAFNLL. Topologically, residues 164 to 167 are extracellular; it reads SAGR. A helical transmembrane segment spans residues 168–187; it reads IPLWGGVLITIVDTFFFLFL. Residues 188 to 196 are Cytoplasmic-facing; the sequence is DNYGLRKLE. Residues 197–217 traverse the membrane as a helical segment; sequence AFFGLLITIMALTFGYEYVVA. Residues 218-240 lie on the Extracellular side of the membrane; it reads RPEQGALLRGLFLPSCPGCGHPE. Residues 241–259 traverse the membrane as a helical segment; it reads LLQAVGIVGAIIMPHNIYL. Residues 260-287 lie on the Cytoplasmic side of the membrane; sequence HSALVKSREIDRARRADIREANMYFLIE. The helical transmembrane segment at 288 to 307 threads the bilayer; it reads ATIALSVSFIINLFVMAVFG. At 308–349 the chain is on the extracellular side; the sequence is QAFYQKTNQAAFNICANSSLHDYAKIFPMNNATVAVDIYQGG. N-linked (GlcNAc...) asparagine glycans are attached at residues Asn-324 and Asn-338. Residues 350-369 form a helical membrane-spanning segment; it reads VILGCLFGPAALYIWAIGLL. The Cytoplasmic portion of the chain corresponds to 370 to 400; it reads AAGQSSTMTGTYAGQFVMEGFLRLRWSRFAR. Residues 401–418 form a helical membrane-spanning segment; that stretch reads VLLTRSCAILPTVLVAVF. Over 419-429 the chain is Extracellular; sequence RDLRDLSGLND. Residues 430-450 traverse the membrane as a helical segment; that stretch reads LLNVLQSLLLPFAVLPILTFT. The Cytoplasmic portion of the chain corresponds to 451-466; it reads SMPTLMQEFANGLLNK. Residues 467–488 form a helical membrane-spanning segment; it reads VVTSSIMVLVCAINLYFVVSYL. The Extracellular portion of the chain corresponds to 489–496; sequence PSLPHPAY. The chain crosses the membrane as a helical span at residues 497-516; it reads FGLAALLAAAYLGLSTYLVW. Over 517-550 the chain is Cytoplasmic; it reads TCCLAHGATFLAHSSHHHFLYGLLEEDQKGETSG.

This sequence belongs to the NRAMP family. As to expression, macrophages; peripheral blood leukocytes, lung, spleen and liver.

It is found in the late endosome membrane. The protein localises to the lysosome membrane. It carries out the reaction Zn(2+)(in) + H(+)(out) = Zn(2+)(out) + H(+)(in). The catalysed reaction is Fe(2+)(in) + H(+)(out) = Fe(2+)(out) + H(+)(in). It catalyses the reaction Mn(2+)(in) + H(+)(out) = Mn(2+)(out) + H(+)(in). In terms of biological role, macrophage-specific antiporter that fluxes metal ions in either direction against a proton gradient. Localized to late endosomal lysosomal membranes, delivers bivalent cations from the cytosol into these acidic compartments where they may directly affect antimicrobial activity. Involved in iron metabolism and host natural resistance to infection with intracellular parasites. Pathogen resistance involves sequestration of Fe(2+) and Mn(2+), cofactors of both prokaryotic and eukaryotic catalases and superoxide dismutases, not only to protect the macrophage against its own generation of reactive oxygen species, but to deny the cations to the pathogen for synthesis of its protective enzymes. In Homo sapiens (Human), this protein is Natural resistance-associated macrophage protein 1.